We begin with the raw amino-acid sequence, 369 residues long: Chaperone protein DnaJ (369 aa).

A J domain is found at 7 to 73; the sequence is DYYEILGVPR…QKRAMYDRFG (67 aa). The CR-type zinc-finger motif lies at 143–225; the sequence is GAEIPVEYER…CGGSGRVLRK (83 aa). Residues C156, C159, C173, C176, C199, C202, C213, and C216 each contribute to the Zn(2+) site. 4 CXXCXGXG motif repeats span residues 156-163, 173-180, 199-206, and 213-220; these read CPRCGGTG, CPSCGGTG, CERCGGTG, and CHECGGSG.

It belongs to the DnaJ family. Homodimer. Requires Zn(2+) as cofactor.

It is found in the cytoplasm. Participates actively in the response to hyperosmotic and heat shock by preventing the aggregation of stress-denatured proteins and by disaggregating proteins, also in an autonomous, DnaK-independent fashion. Unfolded proteins bind initially to DnaJ; upon interaction with the DnaJ-bound protein, DnaK hydrolyzes its bound ATP, resulting in the formation of a stable complex. GrpE releases ADP from DnaK; ATP binding to DnaK triggers the release of the substrate protein, thus completing the reaction cycle. Several rounds of ATP-dependent interactions between DnaJ, DnaK and GrpE are required for fully efficient folding. Also involved, together with DnaK and GrpE, in the DNA replication of plasmids through activation of initiation proteins. The polypeptide is Chaperone protein DnaJ (Thermotoga sp. (strain RQ2)).